A 650-amino-acid polypeptide reads, in one-letter code: GATA zinc finger domain-containing protein 11 (650 aa).

Low complexity predominate over residues 16–79 (LYNNTNTNSN…NSSNSLSSSF (64 aa)). Disordered stretches follow at residues 16-96 (LYNN…SGYN), 111-181 (KRSN…TTPL), 221-335 (NNSN…NNNK), and 409-515 (RIFG…NKRK). Residues 116–129 (LDDNMSVPTLQNFT) show a composition bias toward polar residues. 2 stretches are compositionally biased toward low complexity: residues 130-180 (NNNN…PTTP) and 221-260 (NNSN…NNNN). Positions 261–272 (QSIVPQSIHLQS) are enriched in polar residues. Low complexity predominate over residues 273-334 (TTPQIQPLSL…NNSYNTNNNN (62 aa)). Basic residues predominate over residues 425 to 434 (RPRRFRKSKV). Over residues 442–511 (HNNNNNNINN…GNGNTNSTNN (70 aa)) the composition is skewed to low complexity. A GATA-type zinc finger spans residues 522-547 (CTSCGTTSSPEWRKGPAGNQSLCNAC). The interval 619–650 (QQQQQQQQQQQNHHHQQLQQQQQQQQQQQLHH) is disordered.

Transcription factor that regulates morphogenetic cell movement during development. The polypeptide is GATA zinc finger domain-containing protein 11 (gtaK) (Dictyostelium discoideum (Social amoeba)).